The following is a 139-amino-acid chain: uncharacterized protein (139 aa).

Residues 19 to 73 (IRLRRTMLGMSQEKLGESLGITFQQIQKYEKGTNRVGASRLQNISQILNVPVSFF) form the HTH cro/C1-type domain. Residues 30–49 (QEKLGESLGITFQQIQKYEK) constitute a DNA-binding region (H-T-H motif).

This is an uncharacterized protein from Rhizobium meliloti (strain 1021) (Ensifer meliloti).